The chain runs to 343 residues: 3-dehydroquinate synthase (343 aa).

NAD(+) is bound by residues 61 to 66 (SGEKYK), 95 to 99 (GVISD), 119 to 120 (TT), K132, K141, and 159 to 162 (FLKT). Residues E174, H231, and H248 each contribute to the Zn(2+) site.

This sequence belongs to the sugar phosphate cyclases superfamily. Dehydroquinate synthase family. It depends on Co(2+) as a cofactor. The cofactor is Zn(2+). NAD(+) is required as a cofactor.

The protein resides in the cytoplasm. It carries out the reaction 7-phospho-2-dehydro-3-deoxy-D-arabino-heptonate = 3-dehydroquinate + phosphate. It participates in metabolic intermediate biosynthesis; chorismate biosynthesis; chorismate from D-erythrose 4-phosphate and phosphoenolpyruvate: step 2/7. Catalyzes the conversion of 3-deoxy-D-arabino-heptulosonate 7-phosphate (DAHP) to dehydroquinate (DHQ). The polypeptide is 3-dehydroquinate synthase (Helicobacter pylori (strain P12)).